The sequence spans 353 residues: Photosystem II D2 protein (353 aa).

N-acetylthreonine is present on Thr-2. Thr-2 bears the Phosphothreonine mark. Residues 41-61 (CAYFALGGWFTGTTFVTSWYT) traverse the membrane as a helical segment. Chlorophyll a is bound at residue His-118. Residues 125–141 (GFMLRQFELARSVQLRP) traverse the membrane as a helical segment. Residues Gln-130 and Asn-143 each coordinate pheophytin a. A helical membrane pass occupies residues 153 to 166 (VFVSVFLIYPLGQS). His-198 is a binding site for chlorophyll a. The helical transmembrane segment at 208-228 (AALLCAIHGATVENTLFEDGD) threads the bilayer. A plastoquinone is bound by residues His-215 and Phe-262. Fe cation is bound at residue His-215. His-269 is a Fe cation binding site. The helical transmembrane segment at 279 to 295 (GLWMSALGVVGLALNLR) threads the bilayer.

This sequence belongs to the reaction center PufL/M/PsbA/D family. As to quaternary structure, PSII is composed of 1 copy each of membrane proteins PsbA, PsbB, PsbC, PsbD, PsbE, PsbF, PsbH, PsbI, PsbJ, PsbK, PsbL, PsbM, PsbT, PsbX, PsbY, PsbZ, Psb30/Ycf12, at least 3 peripheral proteins of the oxygen-evolving complex and a large number of cofactors. It forms dimeric complexes. The D1/D2 heterodimer binds P680, chlorophylls that are the primary electron donor of PSII, and subsequent electron acceptors. It shares a non-heme iron and each subunit binds pheophytin, quinone, additional chlorophylls, carotenoids and lipids. There is also a Cl(-1) ion associated with D1 and D2, which is required for oxygen evolution. The PSII complex binds additional chlorophylls, carotenoids and specific lipids. serves as cofactor.

It localises to the plastid. The protein localises to the chloroplast thylakoid membrane. The enzyme catalyses 2 a plastoquinone + 4 hnu + 2 H2O = 2 a plastoquinol + O2. In terms of biological role, photosystem II (PSII) is a light-driven water:plastoquinone oxidoreductase that uses light energy to abstract electrons from H(2)O, generating O(2) and a proton gradient subsequently used for ATP formation. It consists of a core antenna complex that captures photons, and an electron transfer chain that converts photonic excitation into a charge separation. The D1/D2 (PsbA/PsbD) reaction center heterodimer binds P680, the primary electron donor of PSII as well as several subsequent electron acceptors. D2 is needed for assembly of a stable PSII complex. The chain is Photosystem II D2 protein from Ceratophyllum demersum (Rigid hornwort).